The chain runs to 356 residues: Methionine import ATP-binding protein MetN 1 (356 aa).

Residues Ile15–Leu254 form the ABC transporter domain. Gly51–Ser58 contacts ATP.

This sequence belongs to the ABC transporter superfamily. Methionine importer (TC 3.A.1.24) family. The complex is composed of two ATP-binding proteins (MetN), two transmembrane proteins (MetI) and a solute-binding protein (MetQ).

It is found in the cell inner membrane. The enzyme catalyses L-methionine(out) + ATP + H2O = L-methionine(in) + ADP + phosphate + H(+). It catalyses the reaction D-methionine(out) + ATP + H2O = D-methionine(in) + ADP + phosphate + H(+). Functionally, part of the ABC transporter complex MetNIQ involved in methionine import. Responsible for energy coupling to the transport system. This chain is Methionine import ATP-binding protein MetN 1, found in Acinetobacter baylyi (strain ATCC 33305 / BD413 / ADP1).